Reading from the N-terminus, the 346-residue chain is Protein tas (346 aa).

The active-site Proton donor is the Y53. S234–K244 lines the NADP(+) pocket.

This sequence belongs to the aldo/keto reductase family. Aldo/keto reductase 2 subfamily.

This Escherichia coli (strain K12) protein is Protein tas (tas).